Reading from the N-terminus, the 583-residue chain is Membrane-bound O-acyltransferase gup1 (583 aa).

Residues 1 to 52 lie on the Extracellular side of the membrane; it reads MLRLFRFDVLETSTKDTERPNSKSSRLSSTSGSSHPSSSSRLTVRSAVPEKS. The tract at residues 15–42 is disordered; that stretch reads KDTERPNSKSSRLSSTSGSSHPSSSSRL. Positions 22–40 are enriched in low complexity; sequence SKSSRLSSTSGSSHPSSSS. Residues 53–73 traverse the membrane as a helical segment; sequence AFGSIEFIFYFSVILSILTIA. Residues 74–119 are Cytoplasmic-facing; it reads CFKIHYVSSPKHPNYKNIEKYLKPGWLFGQKVDSADFQYSAFRENM. Residues 120–140 traverse the membrane as a helical segment; sequence PILLLVIIVYNFLWRLVKLVF. At 141-159 the chain is on the extracellular side; it reads TKNTNDELAIKNNYRLCFS. Residues 160-180 traverse the membrane as a helical segment; sequence LLFALLVYGTGVIYVLTIALI. Residues 181-191 are Cytoplasmic-facing; the sequence is NYLISKSLKNS. Residues 192–212 form a helical membrane-spanning segment; sequence IFNPLLTWTLDISVVFFKEYF. The Extracellular segment spans residues 213–298; sequence AYCKFSSLHP…SCLDEDYNLK (86 aa). Residues 299 to 319 traverse the membrane as a helical segment; sequence NFLTYIFYAPLYLAGPIISFN. Over 320–343 the chain is Cytoplasmic; the sequence is NFMSQMKYPTVSTLKYRNLLYAIR. A helical membrane pass occupies residues 344–364; the sequence is FLVCVLTMEFLLHYAYVTAIS. The Extracellular segment spans residues 365–373; the sequence is KDGNWNQYS. A helical transmembrane segment spans residues 374–394; that stretch reads AVESAMISFIVLFMTWLKLLI. The Cytoplasmic segment spans residues 395 to 444; sequence PWRLFRLWSLIDDIEPPENIVRCMCNNYSAVGFWRAWHRSFNRWLIRYIY. The next 2 membrane-spanning stretches (helical) occupy residues 445-465 and 466-486; these read VPLGGSNHSILNLFIIFTFVA and LWHDISWELFAWGWLIVLFIL. The active site involves His-468. Residues 487 to 512 are Cytoplasmic-facing; sequence PERLCCFMSRRTGLTKHPYYRYISGF. Residues 513–533 form a helical membrane-spanning segment; the sequence is GAALNIYFMIICNLIGFAVGI. The Extracellular segment spans residues 534–549; the sequence is DGIKNVLVSFFLTLKG. Residues 550 to 570 traverse the membrane as a helical segment; it reads AMSAIAAFIMFFSAVQIMFQI. Topologically, residues 571–583 are cytoplasmic; that stretch reads RVNEEEEGINLRC.

This sequence belongs to the membrane-bound acyltransferase family.

The protein localises to the cell membrane. It localises to the endoplasmic reticulum membrane. The protein resides in the mitochondrion membrane. In terms of biological role, membrane-bound O-acyltransferase involved in the remodeling of glycosylphosphatidylinositol (GPI) anchors. Acts only on GPI-anchored proteins, but not on free GPI lipids. Also involved in lipid metabolism, having profound effects on sphingolipid-sterol-ordered domains integrity and assembly. Involved in cell integrity and apoptosis. This chain is Membrane-bound O-acyltransferase gup1 (gup1), found in Schizosaccharomyces pombe (strain 972 / ATCC 24843) (Fission yeast).